Reading from the N-terminus, the 140-residue chain is Transcriptional regulator YdaT (140 aa).

In terms of biological role, transcriptional regulator that causes a severe detrimental growth effect and reduces cell viability. When expressed, it alters expression of a variety of bacterial regulons normally controlled by the transcriptional regulatory protein RcsA, resulting in deficient lipopolysaccharide biosynthesis and cell division. YdaT has no effect on Rac prophage excision. Overexpression of ydaST reduces growth and leads to loss of cell viability. May contribute to toxicity and morphological defects. The protein is Transcriptional regulator YdaT (ydaT) of Escherichia coli (strain K12).